The chain runs to 1044 residues: Ras GTPase-activating protein 1 (1044 aa).

Position 1 is an N-acetylmethionine (Met-1). Residues 1-160 are hydrophobic; that stretch reads MMAAEAGGEE…DEGDSLDGPE (160 aa). Residues 178–269 enclose the SH2 1 domain; sequence WYHGKLDRTI…LKGEKLLYPV (92 aa). Residues 276–338 enclose the SH3 domain; sequence EDRRRVRAIL…VEDLVEEVGR (63 aa). Residues 348–438 form the SH2 2 domain; sequence WFHGKISKQE…VEGYYLKEPV (91 aa). In terms of domain architecture, PH spans 471–574; the sequence is NIVKKGYLLK…WMKGLQAFCN (104 aa). A C2 domain is found at 574 to 687; it reads NLRKSSPGTS…QKGHATDEWF (114 aa). The residue at position 612 (Tyr-612) is a Phosphotyrosine. 2 repeats span residues 646 to 664 and 665 to 683; these read PDIN…KSKD and PDIL…GHAT. Positions 761–971 constitute a Ras-GAP domain; the sequence is KLESLLLCTL…HRMIMFLDEL (211 aa). Ser-828 is subject to Phosphoserine.

In terms of assembly, interacts with SQSTM1. Interacts with SPSB1; the interaction does not promote degradation. Interacts with CAV2 (tyrosine phosphorylated form). Directly interacts with NCK1. Interacts with PDGFRB (tyrosine phosphorylated). Interacts (via SH2 domain) with the 'Tyr-9' phosphorylated form of PDPK1. Interacts with tyrosine-phosphorylated EPHB4. Post-translationally, phosphorylated by SRC and LCK. The phosphorylation SRC inhibits its ability to stimulate the Ras-GTPase activity, whereas phosphorylation by LCK does not display any effect on stimulation activity.

The protein resides in the cytoplasm. Functionally, inhibitory regulator of the Ras-cyclic AMP pathway. Stimulates the GTPase of normal but not oncogenic Ras p21. This chain is Ras GTPase-activating protein 1 (RASA1), found in Bos taurus (Bovine).